Reading from the N-terminus, the 757-residue chain is MDVNPTLLFLKVPAQNAISTTFPYTGDPPYSHGTGTGYTMDTVNRTHQYSEKGKWTTNTETGAPQLNPIDGPLPEDNEPSGYAQTDCVLEAMAFLEESHPGIFENSCLETMEVIQQTRVDKLTQGRQTYDWTLNRNQPAATALANTIEVFRSNGLTANESGRLIDFLKDVIESMDKEEMEITTHFQRKRRVRDNMTKKMVTQRTIGKKKQRLNKRIYLIRALTLNTMTKDAERGKLKRRAIATPGMQIRGFVYFVETLARSICENLEQSGLPVGGNEKKAKLANVVRKMMTNSQDTELSFTITGDNTKWNENQNPRMFLAMITYITRNQPEWFRNVLSIAPIMFSNKMARLGKGYMFKSKSMKLRTQIPAEMLTSIDLKYFNESTRKKIEKIRPLLIDGTVSLSPGMMMGMFNMLSTVLGVSILNLGQKKYTKTTYWWDGLQSSDDFALIVNAPNHEGIQAGVDRFYRTCKLVGINMSKKKSYTNRTGTFEFTSFFYRYGFVANFSMELPSFGVSGINESDDMSIGVTVIKNNMINNDLGPATAQMALQLFIKDYRYTYRCHRGDTQIQTRRSFELKKLWEQTRSKAGLLISDGGPNLYNIRNLHIPEVCLKWELMDEDYQGRLCNPLNPFVSHKEIESVNNAVVMPAHGPAKSMEYDAVATTHSWIPKRNRSILNTSQRGILEDQQMYQKCCNLFEKFFPSSSYRRPVGISSMVEAMVSRARIDARIDFESGRIKKEEFAEIMKICSTIEELRRQK.

Positions Ser-50–Tyr-82 are disordered. Polar residues predominate over residues Trp-55 to Pro-64. 2 consecutive short sequence motifs (nuclear localization signal) follow at residues Arg-187–Met-195 and Arg-203–Ile-216. The tract at residues Arg-249 to Glu-256 is promoter-binding site. A RdRp catalytic domain is found at Val-286–Tyr-483.

It belongs to the influenza viruses polymerase PB1 family. As to quaternary structure, influenza RNA polymerase is composed of three subunits: PB1, PB2 and PA. Interacts (via N-terminus) with PA (via C-terminus). Interacts (via C-terminus) with PB2 (via N-terminus); this interaction is essential for transcription initiation. Phosphorylated by host PRKCA.

It is found in the host nucleus. It localises to the host cytoplasm. It carries out the reaction RNA(n) + a ribonucleoside 5'-triphosphate = RNA(n+1) + diphosphate. In terms of biological role, RNA-dependent RNA polymerase which is responsible for replication and transcription of virus RNA segments. The transcription of viral mRNAs occurs by a unique mechanism called cap-snatching. 5' methylated caps of cellular mRNAs are cleaved after 10-13 nucleotides by PA. In turn, these short capped RNAs are used as primers by PB1 for transcription of viral mRNAs. During virus replication, PB1 initiates RNA synthesis and copy vRNA into complementary RNA (cRNA) which in turn serves as a template for the production of more vRNAs. The protein is RNA-directed RNA polymerase catalytic subunit of Influenza A virus (strain A/Leningrad/134/17/1957 H2N2).